The following is a 341-amino-acid chain: Platelet-activating factor receptor (341 aa).

Residues 1–16 are Extracellular-facing; it reads MEQNGSFRVDSEFRYT. Asparagine 4 is a glycosylation site (N-linked (GlcNAc...) asparagine). Residues 17–38 traverse the membrane as a helical segment; the sequence is LFPIVYSVIFVLGVVANGYVLW. The Cytoplasmic portion of the chain corresponds to 39-54; it reads VFATLYPSKKLNEIKI. A helical membrane pass occupies residues 55 to 74; sequence FMVNLTVADLLFLMTLPLWI. At 75 to 91 the chain is on the extracellular side; the sequence is VYYSNEGDWIVHKFLCN. A disulfide bridge links cysteine 90 with cysteine 173. A helical membrane pass occupies residues 92 to 113; it reads LAGCLFFINTYCSVAFLGVITY. Residues 114 to 133 lie on the Cytoplasmic side of the membrane; it reads NRYQAVAYPIKTAQATTRKR. The chain crosses the membrane as a helical span at residues 134–155; sequence GITLSLVIWISIAATASYFLAT. Over 156-184 the chain is Extracellular; sequence DSTNVVPKKDGSGNITRCFEHYEPYSVPI. Asparagine 169 carries N-linked (GlcNAc...) asparagine glycosylation. Residues 185–205 form a helical membrane-spanning segment; that stretch reads LVVHIFITSCFFLVFFLIFYC. Over 206–233 the chain is Cytoplasmic; the sequence is NMVIIHTLLTRPVRQQRKPEVKRRALWM. A helical transmembrane segment spans residues 234 to 254; it reads VCTVLAVFVICFVPHHVVQLP. Topologically, residues 255 to 275 are extracellular; it reads WTLAELGYQTNFHQAINDAHQ. The helical transmembrane segment at 276–295 threads the bilayer; it reads ITLCLLSTNCVLDPVIYCFL. The Cytoplasmic segment spans residues 296–341; sequence TKKFRKHLSEKFYSMRSSRKCSRATSDTCTEVMMPANQTPVLPLKN.

This sequence belongs to the G-protein coupled receptor 1 family. In terms of assembly, interacts with ARRB1. As to expression, present in almost all organs including spleen, small intestine, kidney, lung, liver and brain.

It localises to the cell membrane. Functionally, receptor for platelet activating factor, a chemotactic phospholipid mediator that possesses potent inflammatory, smooth-muscle contractile and hypotensive activity. Seems to mediate its action via a G protein that activates a phosphatidylinositol-calcium second messenger system. The sequence is that of Platelet-activating factor receptor (Ptafr) from Rattus norvegicus (Rat).